We begin with the raw amino-acid sequence, 254 residues long: (2Z,6E)-farnesyl diphosphate synthase (254 aa).

The active site involves aspartate 34. Position 34 (aspartate 34) interacts with Mg(2+). Substrate contacts are provided by residues 35–38, tryptophan 39, histidine 52, and 80–82; these read GNRR and STD. The active-site Proton acceptor is asparagine 83. Substrate is bound by residues arginine 86, arginine 203, and 209-211; that span reads RLS. Residue glutamate 222 participates in Mg(2+) binding.

The protein belongs to the UPP synthase family. Z-FPP synthase subfamily. As to quaternary structure, homodimer. Mg(2+) is required as a cofactor.

It catalyses the reaction isopentenyl diphosphate + (2E)-geranyl diphosphate = (2Z,6E)-farnesyl diphosphate + diphosphate. Functionally, catalyzes the condensation of only one isopentenyl pyrophosphate (IPP) unit in the cis configuration to E-geranyl diphosphate (E-GPP) generating the 15 carbon product (2Z,6E)-farnesyl diphosphate (Z-FPP or EZ-FPP). Only geranyl diphosphate (GPP) can be used as isoprenyl acceptor. The sequence is that of (2Z,6E)-farnesyl diphosphate synthase from Thermobifida fusca (strain YX).